The chain runs to 387 residues: MQTGHPADGVYFGLMSGTSMDGVDGVAVRFEAGKPPAVLSEAFVGFADTLRDALFALQQPGGDEIEREALAANALAARYAVCCHELLRTAGLLPDDVRALGVHGQTVRHRPERGYTRQLNNAALLAELTRIDVIADFRSRDVAAGGQGAPLVPAFHATVFGSPDETRVVCNLGGISNITILPAGGGPQGEGHARNDTVRGHDCGPANALIDAWVERHLKQPFDDGGRFAARGKVDETLLAALLDEPYFRQNAPKSTGRDLFNADWLDAKLAGFQHLAPENVQATLTALTAATVADEIARHAGDCRAVYVCGGGARNPVLLDALATALAARGLDAAVATTAALGVPPQQVESLAFAWLAYRFNARAPGNVSTVTGAAGERVLGALYPR.

17-24 (GTSMDGVD) is an ATP binding site.

This sequence belongs to the anhydro-N-acetylmuramic acid kinase family.

The catalysed reaction is 1,6-anhydro-N-acetyl-beta-muramate + ATP + H2O = N-acetyl-D-muramate 6-phosphate + ADP + H(+). Its pathway is amino-sugar metabolism; 1,6-anhydro-N-acetylmuramate degradation. It participates in cell wall biogenesis; peptidoglycan recycling. Its function is as follows. Catalyzes the specific phosphorylation of 1,6-anhydro-N-acetylmuramic acid (anhMurNAc) with the simultaneous cleavage of the 1,6-anhydro ring, generating MurNAc-6-P. Is required for the utilization of anhMurNAc either imported from the medium or derived from its own cell wall murein, and thus plays a role in cell wall recycling. The protein is Anhydro-N-acetylmuramic acid kinase of Burkholderia mallei (strain ATCC 23344).